A 180-amino-acid polypeptide reads, in one-letter code: ATP synthase subunit delta (180 aa).

This sequence belongs to the ATPase delta chain family. In terms of assembly, F-type ATPases have 2 components, F(1) - the catalytic core - and F(0) - the membrane proton channel. F(1) has five subunits: alpha(3), beta(3), gamma(1), delta(1), epsilon(1). F(0) has three main subunits: a(1), b(2) and c(10-14). The alpha and beta chains form an alternating ring which encloses part of the gamma chain. F(1) is attached to F(0) by a central stalk formed by the gamma and epsilon chains, while a peripheral stalk is formed by the delta and b chains.

It localises to the cell inner membrane. F(1)F(0) ATP synthase produces ATP from ADP in the presence of a proton or sodium gradient. F-type ATPases consist of two structural domains, F(1) containing the extramembraneous catalytic core and F(0) containing the membrane proton channel, linked together by a central stalk and a peripheral stalk. During catalysis, ATP synthesis in the catalytic domain of F(1) is coupled via a rotary mechanism of the central stalk subunits to proton translocation. Functionally, this protein is part of the stalk that links CF(0) to CF(1). It either transmits conformational changes from CF(0) to CF(1) or is implicated in proton conduction. The chain is ATP synthase subunit delta from Parabacteroides distasonis (strain ATCC 8503 / DSM 20701 / CIP 104284 / JCM 5825 / NCTC 11152).